The chain runs to 262 residues: Adenosylcobinamide-GDP ribazoletransferase (262 aa).

Transmembrane regions (helical) follow at residues 43–63 (YFGLVGLLVGLLSAIVFWLTQ), 66–86 (LPAGVSVLLAMLVGVLLTGGF), 120–140 (GALALILALLLKWQLLVELAL), 146–166 (AGSALIVAHTVSRVVSASIIF), 191–211 (LLILIASGVLVLLFLKGLAAL), and 242–262 (AAQQIAEIVCYFVLLVVGNIL).

This sequence belongs to the CobS family. The cofactor is Mg(2+).

Its subcellular location is the cell inner membrane. The enzyme catalyses alpha-ribazole + adenosylcob(III)inamide-GDP = adenosylcob(III)alamin + GMP + H(+). The catalysed reaction is alpha-ribazole 5'-phosphate + adenosylcob(III)inamide-GDP = adenosylcob(III)alamin 5'-phosphate + GMP + H(+). Its pathway is cofactor biosynthesis; adenosylcobalamin biosynthesis; adenosylcobalamin from cob(II)yrinate a,c-diamide: step 7/7. Functionally, joins adenosylcobinamide-GDP and alpha-ribazole to generate adenosylcobalamin (Ado-cobalamin). Also synthesizes adenosylcobalamin 5'-phosphate from adenosylcobinamide-GDP and alpha-ribazole 5'-phosphate. The sequence is that of Adenosylcobinamide-GDP ribazoletransferase from Shewanella baltica (strain OS185).